We begin with the raw amino-acid sequence, 480 residues long: Cytochrome P450 724B1 (480 aa).

A helical transmembrane segment spans residues 6–26; the sequence is LVLAALVILLALLLTLVLSHF. Position 426 (Cys426) interacts with heme.

Belongs to the cytochrome P450 family. It depends on heme as a cofactor. In terms of tissue distribution, ubiquitously expressed at low levels, but preferentially in the internodes and the florets before flowering.

The protein resides in the membrane. The catalysed reaction is campesterol + reduced [NADPH--hemoprotein reductase] + O2 = (22S)-22-hydroxycampesterol + oxidized [NADPH--hemoprotein reductase] + H2O + H(+). Its pathway is plant hormone biosynthesis; brassinosteroid biosynthesis. In terms of biological role, involved in brassinosteroid biosynthesis. May catalyze a C6-oxidation step and may be involved to supply 6-deoxotyphasterol and typhasterol. Involved in internode elongation and seed development. Catalyzes the conversion of campesterol (CR) to (22S)-22-hydroxycampesterol (22-OHCR, 22-hydroxyCR). This Oryza sativa subsp. japonica (Rice) protein is Cytochrome P450 724B1.